The chain runs to 490 residues: Ribulose bisphosphate carboxylase large chain (490 aa).

2 residues coordinate substrate: asparagine 127 and threonine 177. Catalysis depends on lysine 179, which acts as the Proton acceptor. Residue lysine 181 participates in substrate binding. Residues lysine 205, aspartate 207, and glutamate 208 each contribute to the Mg(2+) site. Lysine 205 carries the post-translational modification N6-carboxylysine. Histidine 297 serves as the catalytic Proton acceptor. Positions 298, 330, and 382 each coordinate substrate.

This sequence belongs to the RuBisCO large chain family. Type I subfamily. In terms of assembly, heterohexadecamer of 8 large chains and 8 small chains. The cofactor is Mg(2+).

Its subcellular location is the plastid. The protein localises to the chloroplast. The enzyme catalyses 2 (2R)-3-phosphoglycerate + 2 H(+) = D-ribulose 1,5-bisphosphate + CO2 + H2O. The catalysed reaction is D-ribulose 1,5-bisphosphate + O2 = 2-phosphoglycolate + (2R)-3-phosphoglycerate + 2 H(+). Functionally, ruBisCO catalyzes two reactions: the carboxylation of D-ribulose 1,5-bisphosphate, the primary event in carbon dioxide fixation, as well as the oxidative fragmentation of the pentose substrate in the photorespiration process. Both reactions occur simultaneously and in competition at the same active site. The sequence is that of Ribulose bisphosphate carboxylase large chain from Trieres chinensis (Marine centric diatom).